The primary structure comprises 520 residues: O-methyltransferase cicE (520 aa).

S-adenosyl-L-methionine is bound by residues 300–301, aspartate 323, 355–356, and arginine 371; these read GG and NF.

This sequence belongs to the class I-like SAM-binding methyltransferase superfamily. Cation-independent O-methyltransferase family.

Its pathway is phytotoxin biosynthesis. Functionally, O-methyltransferase; part of the gene cluster that mediates the biosynthesis of cichorine, a phytotoxin active against knapweed, corn, and soybeans. The first step in the pathway is performed by the non-reducing polyketide synthase pkbA that condenses one acetyl-CoA starter unit with 3 malonyl-CoA units. PkbA also catalyzes one methylation step to produce 3-methylorsellinate. The nonribosomal peptide synthase-like protein cicB, the cytochrome P450 monooxygenase cicH and the O-methyltransferase cicE are involved in the conversion of 3-methylorsellinate into nidulol. CicB converts 3-methylorsellinate to a yet unidentified intermediate, cicH may play a ring-closing role for cichorine and cicE is plausibly responsible for the methylation of one of the phenol groups. The oxidoreductase cicC acts downstream with still unidentified enzymes to further convert nidulol into cichorine. This Emericella nidulans (strain FGSC A4 / ATCC 38163 / CBS 112.46 / NRRL 194 / M139) (Aspergillus nidulans) protein is O-methyltransferase cicE.